A 221-amino-acid polypeptide reads, in one-letter code: MMKCLFFLCLCLFPILVFSSTFTSQNPINLPSESPVPKPVLDTNGKKLNPNSSYRIISTFWGALGGDVYLGKSPNSDAPCPDGVFRYNSDVGPSGTPVRFIPLSTNIFEDQLLNIQFNIPTVKLCVSYTIWKVGNLNTHLWTMLLETGGTIGKADSSYFKIVKSSKFGYNLLYCPITRPPIVCPFCRDDDFCAKVGVVIQNGKRRLALVNENPLDVLFQEV.

The first 23 residues, 1–23 (MMKCLFFLCLCLFPILVFSSTFT), serve as a signal peptide directing secretion. A propeptide spanning residues 24–32 (SQNPINLPS) is cleaved from the precursor. The short motif at 26-31 (NPINLP) is the Vacuolar targeting signal element. Asparagine 51 carries an N-linked (GlcNAc...) asparagine glycan. Intrachain disulfides connect cysteine 80–cysteine 125 and cysteine 174–cysteine 186.

Belongs to the protease inhibitor I3 (leguminous Kunitz-type inhibitor) family. In terms of tissue distribution, tubers, young leaves and flower bud. Not detected in root, stem or mature leaves.

Its subcellular location is the vacuole. In terms of biological role, inhibitor of cathepsin D (aspartic protease). May also inhibit trypsin and chymotrypsin (serine proteases). Protects the plant by inhibiting proteases of invading organisms. This chain is Aspartic protease inhibitor 1, found in Solanum tuberosum (Potato).